Here is a 321-residue protein sequence, read N- to C-terminus: Glucokinase (321 aa).

8–13 (GDVGGT) is a binding site for ATP.

This sequence belongs to the bacterial glucokinase family.

It is found in the cytoplasm. The enzyme catalyses D-glucose + ATP = D-glucose 6-phosphate + ADP + H(+). The sequence is that of Glucokinase from Salmonella agona (strain SL483).